A 795-amino-acid polypeptide reads, in one-letter code: Lon protease (795 aa).

Positions 11 to 203 constitute a Lon N-terminal domain; sequence GRVIPVSDIV…KFIDYLLKQK (193 aa). 356–363 is a binding site for ATP; that stretch reads GPPGVGKT. The Lon proteolytic domain occupies 593–771; it reads DNVPGVVTGL…EDVLRETLGI (179 aa). Catalysis depends on residues Ser677 and Lys720.

It belongs to the peptidase S16 family. Homohexamer. Organized in a ring with a central cavity.

The protein resides in the cytoplasm. It carries out the reaction Hydrolysis of proteins in presence of ATP.. Its function is as follows. ATP-dependent serine protease that mediates the selective degradation of mutant and abnormal proteins as well as certain short-lived regulatory proteins. Required for cellular homeostasis and for survival from DNA damage and developmental changes induced by stress. Degrades polypeptides processively to yield small peptide fragments that are 5 to 10 amino acids long. Binds to DNA in a double-stranded, site-specific manner. The sequence is that of Lon protease from Clostridium beijerinckii (strain ATCC 51743 / NCIMB 8052) (Clostridium acetobutylicum).